We begin with the raw amino-acid sequence, 338 residues long: Glycerol-3-phosphate dehydrogenase [NAD(P)+] (338 aa).

NADPH is bound by residues Ser-14, Tyr-15, His-35, and Lys-109. Residues Lys-109, Gly-138, and Thr-140 each coordinate sn-glycerol 3-phosphate. Position 142 (Ala-142) interacts with NADPH. Residues Lys-194, Asp-247, Ser-257, Arg-258, and Asn-259 each contribute to the sn-glycerol 3-phosphate site. Catalysis depends on Lys-194, which acts as the Proton acceptor. An NADPH-binding site is contributed by Arg-258. Val-282 and Glu-284 together coordinate NADPH.

It belongs to the NAD-dependent glycerol-3-phosphate dehydrogenase family.

The protein resides in the cytoplasm. It carries out the reaction sn-glycerol 3-phosphate + NAD(+) = dihydroxyacetone phosphate + NADH + H(+). It catalyses the reaction sn-glycerol 3-phosphate + NADP(+) = dihydroxyacetone phosphate + NADPH + H(+). The protein operates within membrane lipid metabolism; glycerophospholipid metabolism. Functionally, catalyzes the reduction of the glycolytic intermediate dihydroxyacetone phosphate (DHAP) to sn-glycerol 3-phosphate (G3P), the key precursor for phospholipid synthesis. The polypeptide is Glycerol-3-phosphate dehydrogenase [NAD(P)+] (Shewanella sediminis (strain HAW-EB3)).